Here is a 524-residue protein sequence, read N- to C-terminus: Citrate exporter 1 (524 aa).

Positions 1–49 are disordered; sequence MSSTTSSSRSDLEKVPVPQVTPRDSDSDKGSLSPEPSTLEAQSSEKPPH. Polar residues predominate over residues 34–45; that stretch reads PEPSTLEAQSSE. The helical transmembrane segment at 60 to 80 threads the bilayer; sequence MVCIVSLAAIFSPLSSNIYFP. An N-linked (GlcNAc...) asparagine glycan is attached at Asn-90. A run of 5 helical transmembrane segments spans residues 95 to 115, 125 to 145, 155 to 175, 186 to 206, and 215 to 235; these read LATL…SFWG, PVFI…AESK, ALQA…IGDI, GIFG…GGIF, and IFWF…VLLP. A glycan (N-linked (GlcNAc...) asparagine) is linked at Asn-244. 6 consecutive transmembrane segments (helical) span residues 296 to 316, 332 to 352, 395 to 415, 417 to 437, 459 to 479, and 481 to 501; these read VFIT…VTSS, IGLT…LVGY, TWWV…SLRT, LAVP…LFTI, LMRC…LDAL, and PDYT…LLYV.

Belongs to the major facilitator superfamily.

It is found in the cell membrane. It catalyses the reaction citrate(in) = citrate(out). Its function is as follows. Transmembrane transporter that exports citrate across the cell membrane. This Aspergillus niger (strain ATCC 1015 / CBS 113.46 / FGSC A1144 / LSHB Ac4 / NCTC 3858a / NRRL 328 / USDA 3528.7) protein is Citrate exporter 1.